We begin with the raw amino-acid sequence, 268 residues long: MALVVKGKVNINEFIDLTKMEKILPSMFTPVKSVMCSKVDKIMVHENESLSEVNLLKGVKLIDSGYVCLAGLVVTGEWNLPDNCRGGVSVCLVDKRMERADEATLGSYYTAAAKKRFQFKVVPNYAITTQDAMKNVWQVLVNIRNVKMSAGFCPLSLEFVSVCIVYRNNIKIGLREKITNVRDGGPMELTEEVVDEFMEDVPMSIRLAKFRSRTGKKSVVPKGNFSSRDRSQPNKNYGNAKDFGGMSFKKNNLIDDGSETSVAESDSF.

Residues 217–268 (KSVVPKGNFSSRDRSQPNKNYGNAKDFGGMSFKKNNLIDDGSETSVAESDSF) form a disordered region. Polar residues predominate over residues 259–268 (ETSVAESDSF).

Belongs to the tobamovirus movement protein family. In terms of assembly, binds to host RBCS at the plasmodesmata; this interaction seems required for viral systemic movement. In resistant plants, interacts with host MBP2C at host microtubules; this interaction prevents virus cell to cell movement. In resistant plants, interacts with host resistance (R) protein (e.g. tomato ToMV resistance protein TM-2(2), AC Q71BG9) at the host plasma membrane; this interaction triggers host defense responses leading to programmed cell death.

It is found in the host cytoplasm. It localises to the host cytoskeleton. The protein resides in the host cell junction. The protein localises to the host plasmodesma. Its function is as follows. Transports viral genome to neighboring plant cells directly through plasmosdesmata, without any budding. The movement protein allows efficient cell to cell propagation, by bypassing the host cell wall barrier. Forms a ribonucleoprotein complex with viral RNA. Binds microtubules and modulates microtubule stability. Can bind double-stranded DNA. Triggers host hypersensitive defense reaction in incompatible plants harboring resistance (R) proteins. The chain is Movement protein (MP) from Allium chinense (Common tobacco).